Consider the following 96-residue polypeptide: UPF0235 protein ESA_00387 (96 aa).

Belongs to the UPF0235 family.

This is UPF0235 protein ESA_00387 from Cronobacter sakazakii (strain ATCC BAA-894) (Enterobacter sakazakii).